Consider the following 753-residue polypeptide: 5-methyltetrahydropteroyltriglutamate--homocysteine methyltransferase (753 aa).

5-methyltetrahydropteroyltri-L-glutamate is bound by residues 17-20 and K117; that span reads RELK. Residues 431–433 and E484 contribute to the L-homocysteine site; that span reads IGS. Residues 431-433 and E484 each bind L-methionine; that span reads IGS. 5-methyltetrahydropteroyltri-L-glutamate is bound by residues 515–516 and W561; that span reads RC. Residue D599 participates in L-homocysteine binding. Position 599 (D599) interacts with L-methionine. E605 is a 5-methyltetrahydropteroyltri-L-glutamate binding site. Residues H641, C643, and E665 each coordinate Zn(2+). The Proton donor role is filled by H694. Zn(2+) is bound at residue C726.

Belongs to the vitamin-B12 independent methionine synthase family. Zn(2+) is required as a cofactor.

The enzyme catalyses 5-methyltetrahydropteroyltri-L-glutamate + L-homocysteine = tetrahydropteroyltri-L-glutamate + L-methionine. It participates in amino-acid biosynthesis; L-methionine biosynthesis via de novo pathway; L-methionine from L-homocysteine (MetE route): step 1/1. Its function is as follows. Catalyzes the transfer of a methyl group from 5-methyltetrahydrofolate to homocysteine resulting in methionine formation. The protein is 5-methyltetrahydropteroyltriglutamate--homocysteine methyltransferase of Shigella dysenteriae serotype 1 (strain Sd197).